The sequence spans 122 residues: Small ribosomal subunit protein uS13 (122 aa).

The tract at residues 97 to 122 (PVRGQRTKTNARTRKGPARTVAGKKK) is disordered.

The protein belongs to the universal ribosomal protein uS13 family. Part of the 30S ribosomal subunit. Forms a loose heterodimer with protein S19. Forms two bridges to the 50S subunit in the 70S ribosome.

Its function is as follows. Located at the top of the head of the 30S subunit, it contacts several helices of the 16S rRNA. In the 70S ribosome it contacts the 23S rRNA (bridge B1a) and protein L5 of the 50S subunit (bridge B1b), connecting the 2 subunits; these bridges are implicated in subunit movement. Contacts the tRNAs in the A and P-sites. The sequence is that of Small ribosomal subunit protein uS13 from Geobacter metallireducens (strain ATCC 53774 / DSM 7210 / GS-15).